The chain runs to 734 residues: Diacylglycerol kinase alpha (734 aa).

EF-hand domains follow at residues 109–144 (RPED…MMRM) and 154–189 (ELRP…TVPL). The Ca(2+) site is built by aspartate 122, aspartate 124, asparagine 126, glutamate 133, aspartate 167, aspartate 169, serine 171, serine 173, and glutamate 178. 2 Phorbol-ester/DAG-type zinc fingers span residues 204-252 (QHMW…ALPC) and 268-318 (SHVW…GHEC). Residues 371-505 (SNTHPLLVFV…MDRWSVEVIP (135 aa)) enclose the DAGKc domain. Lysine 483 is modified (N6-acetyllysine).

It belongs to the eukaryotic diacylglycerol kinase family. As to quaternary structure, monomer.

Its subcellular location is the cytoplasm. The protein localises to the cytosol. It carries out the reaction a 1,2-diacyl-sn-glycerol + ATP = a 1,2-diacyl-sn-glycero-3-phosphate + ADP + H(+). It catalyses the reaction a 1-O-alkyl-sn-glycerol + ATP = a 1-O-alkyl-sn-glycero-3-phosphate + ADP + H(+). The catalysed reaction is 1-O-alkyl-2-acyl-sn-glycerol + ATP = 1-O-alkyl-2-acyl-sn-glycero-3-phosphate + ADP + H(+). The enzyme catalyses 1,2-dihexadecanoyl-sn-glycerol + ATP = 1,2-dihexadecanoyl-sn-glycero-3-phosphate + ADP + H(+). It carries out the reaction 1-hexadecanoyl-2-(9Z-octadecenoyl)-sn-glycerol + ATP = 1-hexadecanoyl-2-(9Z-octadecenoyl)-sn-glycero-3-phosphate + ADP + H(+). It catalyses the reaction 2-(9Z-octadecenoyl)-glycerol + ATP = 2-(9Z-octadecenoyl)-sn-glycero-3-phosphate + ADP + H(+). The catalysed reaction is 1,2-di-(9Z-octadecenoyl)-sn-glycerol + ATP = 1,2-di-(9Z-octadecenoyl)-sn-glycero-3-phosphate + ADP + H(+). The enzyme catalyses 1-octadecanoyl-2-(5Z,8Z,11Z,14Z-eicosatetraenoyl)-sn-glycerol + ATP = 1-octadecanoyl-2-(5Z,8Z,11Z,14Z-eicosatetraenoyl)-sn-glycero-3-phosphate + ADP + H(+). It carries out the reaction 1,2-didecanoyl-sn-glycerol + ATP = 1,2-didecanoyl-sn-glycero-3-phosphate + ADP + H(+). It catalyses the reaction 1-O-hexadecyl-2-acetyl-sn-glycerol + ATP = 1-O-hexadecyl-2-acetyl-sn-glycero-3-phosphate + ADP + H(+). The catalysed reaction is 1-O-hexadecyl-2-(5Z,8Z,11Z,14Z-eicosatetraenoyl)-sn-glycerol + ATP = 1-O-hexadecyl-2-(5Z,8Z,11Z,14Z-eicosatetraenoyl)-sn-glycero-3-phosphate + ADP + H(+). The enzyme catalyses 1-O-hexadecyl-2-(9Z-octadecenoyl)-sn-glycerol + ATP = 1-O-hexadecyl-2-(9Z-octadecenoyl)-sn-glycero-3-phosphate + ADP + H(+). It carries out the reaction 1-O-hexadecyl-sn-glycerol + ATP = 1-O-hexadecyl-sn-glycero-3-phosphate + ADP + H(+). Its pathway is lipid metabolism; glycerolipid metabolism. With respect to regulation, stimulated by calcium and phosphatidylserine. In terms of biological role, diacylglycerol kinase that converts diacylglycerol/DAG into phosphatidic acid/phosphatidate/PA and regulates the respective levels of these two bioactive lipids. Thereby, acts as a central switch between the signaling pathways activated by these second messengers with different cellular targets and opposite effects in numerous biological processes. Also plays an important role in the biosynthesis of complex lipids. Can also phosphorylate 1-alkyl-2-acylglycerol in vitro as efficiently as diacylglycerol provided it contains an arachidonoyl group. Also involved in the production of alkyl-lysophosphatidic acid, another bioactive lipid, through the phosphorylation of 1-alkyl-2-acetyl glycerol. This chain is Diacylglycerol kinase alpha (DGKA), found in Bos taurus (Bovine).